The primary structure comprises 136 residues: Large-conductance mechanosensitive channel (136 aa).

2 helical membrane passes run 9–29 and 79–99; these read AFAS…GAAF and IQTV…LKAI.

It belongs to the MscL family. As to quaternary structure, homopentamer.

Its subcellular location is the cell inner membrane. Channel that opens in response to stretch forces in the membrane lipid bilayer. May participate in the regulation of osmotic pressure changes within the cell. In Shewanella sp. (strain MR-4), this protein is Large-conductance mechanosensitive channel.